We begin with the raw amino-acid sequence, 307 residues long: Protease HtpX homolog (307 aa).

Helical transmembrane passes span 10-30 (VITI…AYGL) and 40-60 (ISII…QWLV). His-144 contacts Zn(2+). Glu-145 is a catalytic residue. His-148 is a Zn(2+) binding site. 2 helical membrane-spanning segments follow: residues 156–176 (LLLA…SMIF) and 187–207 (FFLV…MILG). Residue Glu-213 coordinates Zn(2+).

Belongs to the peptidase M48B family. The cofactor is Zn(2+).

Its subcellular location is the cell membrane. The sequence is that of Protease HtpX homolog from Picrophilus torridus (strain ATCC 700027 / DSM 9790 / JCM 10055 / NBRC 100828 / KAW 2/3).